Consider the following 241-residue polypeptide: Ubiquinone biosynthesis O-methyltransferase (241 aa).

Residues Arg-44, Gly-63, Asp-84, and Met-128 each contribute to the S-adenosyl-L-methionine site.

Belongs to the methyltransferase superfamily. UbiG/COQ3 family.

It carries out the reaction a 3-demethylubiquinol + S-adenosyl-L-methionine = a ubiquinol + S-adenosyl-L-homocysteine + H(+). It catalyses the reaction a 3-(all-trans-polyprenyl)benzene-1,2-diol + S-adenosyl-L-methionine = a 2-methoxy-6-(all-trans-polyprenyl)phenol + S-adenosyl-L-homocysteine + H(+). It participates in cofactor biosynthesis; ubiquinone biosynthesis. Its function is as follows. O-methyltransferase that catalyzes the 2 O-methylation steps in the ubiquinone biosynthetic pathway. The polypeptide is Ubiquinone biosynthesis O-methyltransferase (Hydrogenovibrio crunogenus (strain DSM 25203 / XCL-2) (Thiomicrospira crunogena)).